A 321-amino-acid polypeptide reads, in one-letter code: uncharacterized protein (321 aa).

This sequence belongs to the NAD(P)-dependent epimerase/dehydratase family.

This is an uncharacterized protein from Staphylococcus aureus (strain MRSA252).